Consider the following 234-residue polypeptide: UPF0173 metal-dependent hydrolase Rleg2_1519 (234 aa).

Belongs to the UPF0173 family.

The chain is UPF0173 metal-dependent hydrolase Rleg2_1519 from Rhizobium leguminosarum bv. trifolii (strain WSM2304).